A 211-amino-acid chain; its full sequence is 2,3-bisphosphoglycerate-dependent phosphoglycerate mutase (211 aa).

Substrate is bound by residues 9–16 (RHGQSDWN), 22–23 (TG), arginine 61, 88–91 (ERDY), lysine 99, 115–116 (RR), and 159–160 (GN). Histidine 10 serves as the catalytic Tele-phosphohistidine intermediate. The active-site Proton donor/acceptor is glutamate 88.

It belongs to the phosphoglycerate mutase family. BPG-dependent PGAM subfamily. In terms of assembly, homodimer.

It catalyses the reaction (2R)-2-phosphoglycerate = (2R)-3-phosphoglycerate. Its pathway is carbohydrate degradation; glycolysis; pyruvate from D-glyceraldehyde 3-phosphate: step 3/5. Its function is as follows. Catalyzes the interconversion of 2-phosphoglycerate and 3-phosphoglycerate. The chain is 2,3-bisphosphoglycerate-dependent phosphoglycerate mutase from Rhizobium etli (strain CIAT 652).